A 205-amino-acid chain; its full sequence is MDAIVKNFPVLDDTSGRPTQKEAEEAVRVLLRWAGEDPAREGLKDTPARVAKAYREIFGGYDLAAEDVLGRTFEEVSGYDDIVLEKDIPFYSHCEHHMVPIIGKAHIAYLPNGRVLGLSKIARVVDIYARRLQTQEAMTAQIARAIDETLVPRGVAVMIEAEHLCMAMRGIKKQGATTMTTTFTGEFKSEPAEQVRFMTMLRGFK.

Positions 94, 97, and 165 each coordinate Zn(2+).

It belongs to the GTP cyclohydrolase I family. As to quaternary structure, toroid-shaped homodecamer, composed of two pentamers of five dimers.

The catalysed reaction is GTP + H2O = 7,8-dihydroneopterin 3'-triphosphate + formate + H(+). It functions in the pathway cofactor biosynthesis; 7,8-dihydroneopterin triphosphate biosynthesis; 7,8-dihydroneopterin triphosphate from GTP: step 1/1. This Sinorhizobium medicae (strain WSM419) (Ensifer medicae) protein is GTP cyclohydrolase 1.